Reading from the N-terminus, the 209-residue chain is Response regulator protein VraR (209 aa).

The 117-residue stretch at 4 to 120 folds into the Response regulatory domain; the sequence is KVLFVDDHEM…DIADAVRKTS (117 aa). Aspartate 55 is modified (4-aspartylphosphate). An HTH luxR-type domain is found at 141–206; sequence RAELYEMLTE…QAVIYAFQHN (66 aa). Residues 165–184 constitute a DNA-binding region (H-T-H motif); the sequence is NQEIASASHITIKTVKTHVS.

As to quaternary structure, homodimer. In terms of processing, phosphorylated by VraS. Phosphorylation state of VraR controls dimerization of the protein.

The protein resides in the cytoplasm. In terms of biological role, member of the two-component regulatory system VraS/VraR involved in the control of the cell wall peptidoglycan biosynthesis. Upon cellular stress, the histidine kinase VraS transfers the phosphoryl group onto VraR. Upon phosphorylation, VraR dimerizes at the N-terminal domain. In turn, phosphorylation-induced dimerization expands and enhances the VraR binding to its own promoter leading to increased expression and subsequent modulation of as many as 40 genes, which ultimately constitute the S.aureus response to cell wall damage. In addition, inhibits the host autophagic flux and delays the early stage of autophagosome formation, thereby promoting bacterial survival. Facilitates the ability of S.aureus to resist host polymorphonuclear leukocytes-mediated phagocytosis and killing thus contributing to immune evasion. In Staphylococcus aureus (strain Mu3 / ATCC 700698), this protein is Response regulator protein VraR (vraR).